The following is a 279-amino-acid chain: Energy-coupling factor transporter ATP-binding protein EcfA1 (279 aa).

Residues 6-240 (VRLEHVFYKY…ADAMREIGLG (235 aa)) form the ABC transporter domain. Position 40-47 (40-47 (GHNGSGKS)) interacts with ATP.

This sequence belongs to the ABC transporter superfamily. Energy-coupling factor EcfA family. Forms a stable energy-coupling factor (ECF) transporter complex composed of 2 membrane-embedded substrate-binding proteins (S component), 2 ATP-binding proteins (A component) and 2 transmembrane proteins (T component).

Its subcellular location is the cell membrane. Functionally, ATP-binding (A) component of a common energy-coupling factor (ECF) ABC-transporter complex. Unlike classic ABC transporters this ECF transporter provides the energy necessary to transport a number of different substrates. The polypeptide is Energy-coupling factor transporter ATP-binding protein EcfA1 (Listeria monocytogenes serotype 4b (strain F2365)).